A 182-amino-acid chain; its full sequence is RNA chaperone ProQ (182 aa).

Residues Glu-125 to Asp-160 form a disordered region.

The protein belongs to the ProQ family.

It is found in the cytoplasm. In terms of biological role, RNA chaperone with significant RNA binding, RNA strand exchange and RNA duplexing activities. In Haemophilus ducreyi (strain 35000HP / ATCC 700724), this protein is RNA chaperone ProQ.